We begin with the raw amino-acid sequence, 1630 residues long: Separin (1630 aa).

The segment at 1016 to 1037 (SKHSTGLKLCDSPRSSSMTPRG) is disordered. One can recognise a Peptidase C50 domain in the interval 1443–1542 (EDNISMILNP…SAAMKYYGKL (100 aa)). Residue Cys1531 is part of the active site.

As to quaternary structure, may bind calcium. Interacts with PDS1. Interacts with MCD1.

It is found in the nucleus. It localises to the cytoplasm. The protein resides in the cytoskeleton. The protein localises to the microtubule organizing center. Its subcellular location is the spindle pole body. The enzyme catalyses All bonds known to be hydrolyzed by this endopeptidase have arginine in P1 and an acidic residue in P4. P6 is often occupied by an acidic residue or by a hydroxy-amino-acid residue, the phosphorylation of which enhances cleavage.. With respect to regulation, it is inactivated via its interaction with PDS1, which probably covers its active site. PDS1 degradation at anaphase, liberates it and triggers MCD1 cleavage. In terms of biological role, caspase-like protease, which plays a central role in the chromosome segregation by cleaving the MCD1/SCC1 subunit of the cohesin complex at the onset of anaphase. During most of the cell cycle, it is inactivated by securin/PDS1 protein. It also promotes anaphase spindle elongation. A component of the FEAR (CDC14 early anaphase release) network which promotes CDC14 release from the nucleolus during early anaphase. Cleaves SLK19. This chain is Separin (ESP1), found in Saccharomyces cerevisiae (strain ATCC 204508 / S288c) (Baker's yeast).